Reading from the N-terminus, the 316-residue chain is Methionyl-tRNA formyltransferase (316 aa).

109–112 serves as a coordination point for (6S)-5,6,7,8-tetrahydrofolate; the sequence is SLLP.

Belongs to the Fmt family.

It carries out the reaction L-methionyl-tRNA(fMet) + (6R)-10-formyltetrahydrofolate = N-formyl-L-methionyl-tRNA(fMet) + (6S)-5,6,7,8-tetrahydrofolate + H(+). In terms of biological role, attaches a formyl group to the free amino group of methionyl-tRNA(fMet). The formyl group appears to play a dual role in the initiator identity of N-formylmethionyl-tRNA by promoting its recognition by IF2 and preventing the misappropriation of this tRNA by the elongation apparatus. In Nitrosomonas eutropha (strain DSM 101675 / C91 / Nm57), this protein is Methionyl-tRNA formyltransferase.